Reading from the N-terminus, the 472-residue chain is 2-methylcitrate synthase, mitochondrial (472 aa).

A mitochondrion-targeting transit peptide spans 1–29 (MALNLTSSRRALGSLKPLTRAAFSGVRGY). CoA is bound by residues R75 and K193. H271 lines the oxaloacetate pocket. L306 serves as a coordination point for CoA. Residue H307 is part of the active site. CoA contacts are provided by V348, G350, and Y351. Residues H353 and R362 each coordinate oxaloacetate. The active site involves H353. Positions 402, 403, and 408 each coordinate CoA. D410 is an active-site residue. Oxaloacetate contacts are provided by R436 and R456.

It belongs to the citrate synthase family. In terms of assembly, homodimer.

It is found in the mitochondrion matrix. It catalyses the reaction propanoyl-CoA + oxaloacetate + H2O = (2S,3S)-2-methylcitrate + CoA + H(+). The catalysed reaction is oxaloacetate + acetyl-CoA + H2O = citrate + CoA + H(+). The protein operates within organic acid metabolism; propanoate degradation. Its function is as follows. Component of the methylcitrate cycle that catalyzes the synthesis of (2S,3S)-2-methylcitrate from propionyl-CoA and oxaloacetate. Plays an important role in detoxification of propionyl-CoA, an inhibitor of both primary and secondary metabolism. Also has citrate synthase activity using as substrates acetyl-CoA and oxaloacetate. This is 2-methylcitrate synthase, mitochondrial from Gibberella moniliformis (Maize ear and stalk rot fungus).